A 364-amino-acid polypeptide reads, in one-letter code: 3-methyl-2-oxobutanoate hydroxymethyltransferase 1, mitochondrial (364 aa).

Residues 1-59 (MMMMMRRAFRHLARQQRRPLSHVPESAVYGGPRPQDVGAAAGAGAGAGATRRVTVTTLR) constitute a mitochondrion transit peptide. Positions 94 and 133 each coordinate Mg(2+). Residues 94–95 (DS), Asp133, and Lys163 contribute to the 3-methyl-2-oxobutanoate site. Glu165 provides a ligand contact to Mg(2+). Glu233 functions as the Proton acceptor in the catalytic mechanism.

This sequence belongs to the PanB family. Mg(2+) serves as cofactor.

It is found in the mitochondrion. The enzyme catalyses 3-methyl-2-oxobutanoate + (6R)-5,10-methylene-5,6,7,8-tetrahydrofolate + H2O = 2-dehydropantoate + (6S)-5,6,7,8-tetrahydrofolate. It functions in the pathway cofactor biosynthesis; (R)-pantothenate biosynthesis; (R)-pantoate from 3-methyl-2-oxobutanoate: step 1/2. In terms of biological role, catalyzes the reversible reaction in which hydroxymethyl group from 5,10-methylenetetrahydrofolate is transferred onto alpha-ketoisovalerate to form ketopantoate. This chain is 3-methyl-2-oxobutanoate hydroxymethyltransferase 1, mitochondrial (KPHMT1), found in Oryza sativa subsp. japonica (Rice).